The primary structure comprises 212 residues: Adenylate kinase (212 aa).

An ATP-binding site is contributed by 10 to 15; the sequence is GAGKGT. Residues 30 to 59 are NMP; it reads AIGDIFRAIIKTSSKDAEVINSYVEQGKLI. Residues arginine 36, 57 to 59, 85 to 88, and glutamine 92 contribute to the AMP site; these read KLI and GYPR. The segment at 122–160 is LID; the sequence is GRYSCKSCGKIYNDYFLKPRIDKICDVCKSSVFEYRKDD. Position 123 (arginine 123) interacts with ATP. Cysteine 126 and cysteine 129 together coordinate Zn(2+). 132-133 is an ATP binding site; that stretch reads IY. Zn(2+)-binding residues include cysteine 146 and cysteine 149. AMP contacts are provided by arginine 157 and arginine 168. Lysine 196 contributes to the ATP binding site.

It belongs to the adenylate kinase family. In terms of assembly, monomer.

It is found in the cytoplasm. The catalysed reaction is AMP + ATP = 2 ADP. It participates in purine metabolism; AMP biosynthesis via salvage pathway; AMP from ADP: step 1/1. Its function is as follows. Catalyzes the reversible transfer of the terminal phosphate group between ATP and AMP. Plays an important role in cellular energy homeostasis and in adenine nucleotide metabolism. The protein is Adenylate kinase of Rickettsia bellii (strain RML369-C).